We begin with the raw amino-acid sequence, 225 residues long: Ribose-5-phosphate isomerase A (225 aa).

Residues 32–35 (TGST), 85–88 (DGAD), and 98–101 (KGGG) contribute to the substrate site. Residue glutamate 107 is the Proton acceptor of the active site. Lysine 125 contacts substrate.

The protein belongs to the ribose 5-phosphate isomerase family. In terms of assembly, homodimer.

It catalyses the reaction aldehydo-D-ribose 5-phosphate = D-ribulose 5-phosphate. Its pathway is carbohydrate degradation; pentose phosphate pathway; D-ribose 5-phosphate from D-ribulose 5-phosphate (non-oxidative stage): step 1/1. Its function is as follows. Catalyzes the reversible conversion of ribose-5-phosphate to ribulose 5-phosphate. The sequence is that of Ribose-5-phosphate isomerase A from Marinobacter nauticus (strain ATCC 700491 / DSM 11845 / VT8) (Marinobacter aquaeolei).